A 301-amino-acid polypeptide reads, in one-letter code: MNQIEKTGELSASRFTVRDFTELVKIGIVNSNTITAFTGMWLAFQLNGISFIQNVDVIFFTIVGSALIVAASGAFNNVIDRDIDGIMERTKNRPTMTGKISGKRALMVALVLGVVGTIMLFMTTWQAGVLGVIGVFLYVVVYSLYAKRKLVSNTVIGSFSGAVPPLIGWFAVEPSFSMVPIMLFLVMFCWQPPHFYAIAIKRKDEYAAAGIPMLPVVKGIERTKKSMFFWVILLTILPFFMFDLGIVYVILATLLNIGWLALSVYGFKMADSIKWAKWMFIYSLNYMTILFVAMVVISIFL.

9 helical membrane-spanning segments follow: residues 20–42 (FTELVKIGIVNSNTITAFTGMWL), 55–75 (VDVIFFTIVGSALIVAASGAF), 105–125 (ALMVALVLGVVGTIMLFMTTW), 126–146 (QAGVLGVIGVFLYVVVYSLYA), 150–172 (LVSNTVIGSFSGAVPPLIGWFAV), 176–198 (FSMVPIMLFLVMFCWQPPHFYAI), 227–247 (MFFWVILLTILPFFMFDLGIV), 249–269 (VILATLLNIGWLALSVYGFKM), and 280–300 (FIYSLNYMTILFVAMVVISIF).

It belongs to the UbiA prenyltransferase family. Protoheme IX farnesyltransferase subfamily. In terms of assembly, interacts with CtaA.

It localises to the cell membrane. The enzyme catalyses heme b + (2E,6E)-farnesyl diphosphate + H2O = Fe(II)-heme o + diphosphate. It participates in porphyrin-containing compound metabolism; heme O biosynthesis; heme O from protoheme: step 1/1. Functionally, converts heme B (protoheme IX) to heme O by substitution of the vinyl group on carbon 2 of heme B porphyrin ring with a hydroxyethyl farnesyl side group. This Listeria welshimeri serovar 6b (strain ATCC 35897 / DSM 20650 / CCUG 15529 / CIP 8149 / NCTC 11857 / SLCC 5334 / V8) protein is Protoheme IX farnesyltransferase.